We begin with the raw amino-acid sequence, 317 residues long: Probable transcription factor At5g61620 (317 aa).

A CCHC-type zinc finger spans residues 12–25 (CSHCGHNGHNARTC). Residues 77–111 (DPIAAVDDTGYHSDGQIHSKKGKTAHEKKKGKPWT) form a disordered region. The span at 94 to 108 (HSKKGKTAHEKKKGK) shows a compositional bias: basic residues. Residues 102-158 (HEKKKGKPWTEEEHRNFLIGLNKLGKGDWRGIAKSFVSTRTPTQVASHAQKYFIRLN) enclose the HTH myb-type domain. Positions 130–154 (WRGIAKSFVSTRTPTQVASHAQKYF) form a DNA-binding region, H-T-H motif. Positions 173–206 (SLEDQKEKERNSQDASTKTPPKQPITGIQQPVVQ) are disordered. Over residues 175–184 (EDQKEKERNS) the composition is skewed to basic and acidic residues. Positions 185–206 (QDASTKTPPKQPITGIQQPVVQ) are enriched in polar residues.

The protein localises to the nucleus. In terms of biological role, probable transcription factor involved in somatic embryogenesis. Acts as a positive regulator of BHLH109. This chain is Probable transcription factor At5g61620, found in Arabidopsis thaliana (Mouse-ear cress).